A 467-amino-acid polypeptide reads, in one-letter code: ATP synthase subunit beta (467 aa).

Residue 157–164 coordinates ATP; sequence GGAGVGKT.

The protein belongs to the ATPase alpha/beta chains family. F-type ATPases have 2 components, CF(1) - the catalytic core - and CF(0) - the membrane proton channel. CF(1) has five subunits: alpha(3), beta(3), gamma(1), delta(1), epsilon(1). CF(0) has three main subunits: a(1), b(2) and c(9-12). The alpha and beta chains form an alternating ring which encloses part of the gamma chain. CF(1) is attached to CF(0) by a central stalk formed by the gamma and epsilon chains, while a peripheral stalk is formed by the delta and b chains.

The protein localises to the cell inner membrane. It carries out the reaction ATP + H2O + 4 H(+)(in) = ADP + phosphate + 5 H(+)(out). Its function is as follows. Produces ATP from ADP in the presence of a proton gradient across the membrane. The catalytic sites are hosted primarily by the beta subunits. In Desulfosudis oleivorans (strain DSM 6200 / JCM 39069 / Hxd3) (Desulfococcus oleovorans), this protein is ATP synthase subunit beta.